The chain runs to 513 residues: ATP synthase subunit alpha (513 aa).

Gly169–Thr176 contributes to the ATP binding site.

Belongs to the ATPase alpha/beta chains family. F-type ATPases have 2 components, CF(1) - the catalytic core - and CF(0) - the membrane proton channel. CF(1) has five subunits: alpha(3), beta(3), gamma(1), delta(1), epsilon(1). CF(0) has three main subunits: a(1), b(2) and c(9-12). The alpha and beta chains form an alternating ring which encloses part of the gamma chain. CF(1) is attached to CF(0) by a central stalk formed by the gamma and epsilon chains, while a peripheral stalk is formed by the delta and b chains.

The protein localises to the cell inner membrane. The catalysed reaction is ATP + H2O + 4 H(+)(in) = ADP + phosphate + 5 H(+)(out). Produces ATP from ADP in the presence of a proton gradient across the membrane. The alpha chain is a regulatory subunit. The polypeptide is ATP synthase subunit alpha (Bordetella avium (strain 197N)).